The sequence spans 194 residues: UPF0215 protein Mbar_A0619 (194 aa).

It belongs to the UPF0215 family.

The protein is UPF0215 protein Mbar_A0619 of Methanosarcina barkeri (strain Fusaro / DSM 804).